A 225-amino-acid chain; its full sequence is GTP:AMP phosphotransferase, mitochondrial (225 aa).

Gly-24–Thr-29 contacts GTP. Residues Ser-45–Leu-74 are NMP. AMP is bound by residues Ser-46, Arg-51, Lys-72 to Leu-74, Gly-103 to Arg-106, and Gln-110. Residues Asn-144–Asp-181 are LID. Residues Arg-145 and Val-154–Tyr-155 each bind GTP. Residues Arg-178 and Arg-189 each contribute to the AMP site. Ser-218 provides a ligand contact to GTP.

The protein belongs to the adenylate kinase family. AK3 subfamily. As to quaternary structure, monomer.

It is found in the mitochondrion matrix. The enzyme catalyses a ribonucleoside 5'-triphosphate + AMP = a ribonucleoside 5'-diphosphate + ADP. Involved in maintaining the homeostasis of cellular nucleotides by catalyzing the interconversion of nucleoside phosphates. Has GTP:AMP phosphotransferase and ITP:AMP phosphotransferase activities. Does not accept ATP as phosphate donor. This is GTP:AMP phosphotransferase, mitochondrial from Saccharomyces cerevisiae (strain ATCC 204508 / S288c) (Baker's yeast).